A 680-amino-acid polypeptide reads, in one-letter code: Tripartite terminase subunit 1 (680 aa).

The segment at 180 to 208 adopts a C3H1-type zinc-finger fold; it reads CLECVLETSVVPNQGETLNELLLNHNCHH. ATP is bound at residue 610 to 617; that stretch reads YNITWEKN.

It belongs to the herpesviridae TRM1 protein family. As to quaternary structure, associates with TRM2 and TRM3 to form the tripartite terminase complex. Interacts with portal protein.

It localises to the host nucleus. Functionally, component of the molecular motor that translocates viral genomic DNA in empty capsid during DNA packaging. Forms a tripartite terminase complex together with TRM2 and TRM3 in the host cytoplasm. Once the complex reaches the host nucleus, it interacts with the capsid portal vertex. This portal forms a ring in which genomic DNA is translocated into the capsid. TRM1 carries an endonuclease activity that plays an important role for the cleavage of concatemeric viral DNA into unit length genomes. This Alcelaphine herpesvirus 1 (strain C500) (AlHV-1) protein is Tripartite terminase subunit 1.